The sequence spans 84 residues: Acyl-CoA-binding protein (84 aa).

Positions 1–84 constitute an ACB domain; the sequence is MTTFEEAAQK…LYEQLATKYA (84 aa). Residues Lys12, 27-31, Lys53, and Tyr72 each bind an acyl-CoA; that span reads YGLYK.

This sequence belongs to the ACBP family. Interacts with dhkA.

Binds to acyl-CoA. Processed into the SDF-2 (spore differentiation factor 2) a peptide which triggers sporulation. SDF-2 appears to stimulate prestalk cells to release additional SDF-2 by acting through a signal transduction pathway that also involves dhkA, regA and PKA. Induces encapsulation of prespore cells in a dhkA-dependent manner. GABA induces the release of acbA from prespore cells and induces the exposure of tagC on the surface of prestalk cells where it can convert acbA to SDF-2. Glutamate acts as a competitive inhibitor and is also able to inhibit induction of sporulation by SDF-2. The protein is Acyl-CoA-binding protein (acbA) of Dictyostelium discoideum (Social amoeba).